The chain runs to 57 residues: Preprotein translocase subunit SecG (57 aa).

The Cytoplasmic segment spans residues 1-33 (MARRRKYEGLNPFVAAGLIKFSEEGELERIKLN). Residues 34-55 (PRTAILVSITVIIAILVLNILH) traverse the membrane as a helical segment. The Extracellular segment spans residues 56–57 (PL).

It belongs to the SEC61-beta family. Component of the protein translocase complex. Heterotrimer consisting of alpha (SecY), beta (SecG) and gamma (SecE) subunits. Can form oligomers of the heterotrimer.

It is found in the cell membrane. In terms of biological role, involved in protein export. The function of the beta subunit is unknown, but it may be involved in stabilization of the trimeric complex. This is Preprotein translocase subunit SecG from Pyrobaculum islandicum (strain DSM 4184 / JCM 9189 / GEO3).